A 232-amino-acid polypeptide reads, in one-letter code: MAIQHRDPRGGGGSRDARTNRRIKAREVRVIGAEGEQLGVLPIDQALARAQELGMDLVEVSPMAKPPVCKIMDYGRFKYLEKKKQNEAKKKQVVVQLKEVKLRPRTEEHDYDTKIKKVRAFLGEANKARITVMFRGREMSHRELGQKVLQRVIEDLRDVAVIESAPRMEGRQMFMILAPNPKMLQSQRDKAKAAAAAAPAAAPAAGAPAPTPAPAPAAPAPAPAAADPAAQR.

Disordered stretches follow at residues 1–21 (MAIQHRDPRGGGGSRDARTNR) and 184–232 (LQSQ…AAQR). The span at 193 to 208 (AAAAAAPAAAPAAGAP) shows a compositional bias: low complexity. The segment covering 209–222 (APTPAPAPAAPAPA) has biased composition (pro residues). Over residues 223–232 (PAAADPAAQR) the composition is skewed to low complexity.

It belongs to the IF-3 family. In terms of assembly, monomer.

Its subcellular location is the cytoplasm. IF-3 binds to the 30S ribosomal subunit and shifts the equilibrium between 70S ribosomes and their 50S and 30S subunits in favor of the free subunits, thus enhancing the availability of 30S subunits on which protein synthesis initiation begins. The protein is Translation initiation factor IF-3 of Anaeromyxobacter sp. (strain K).